The primary structure comprises 218 residues: Adenylate kinase (218 aa).

12–17 provides a ligand contact to ATP; the sequence is GAGKGT. Residues 32 to 61 form an NMP region; sequence STGDMLREARSSGTEMGKRVAEVMDRGELV. Residues Thr-33, Arg-38, 59-61, 85-88, and Gln-92 contribute to the AMP site; these read ELV and GFPR. The tract at residues 126–164 is LID; sequence GRFTCGNCGEVYHDVTKPTKEPGKCDVCGSTDLRRRADD. Residue Arg-127 coordinates ATP. The Zn(2+) site is built by Cys-130 and Cys-133. 136–137 is an ATP binding site; sequence VY. Residues Cys-150 and Cys-153 each coordinate Zn(2+). AMP-binding residues include Arg-161 and Arg-172. Ala-200 provides a ligand contact to ATP.

Belongs to the adenylate kinase family. In terms of assembly, monomer.

It is found in the cytoplasm. The enzyme catalyses AMP + ATP = 2 ADP. Its pathway is purine metabolism; AMP biosynthesis via salvage pathway; AMP from ADP: step 1/1. Catalyzes the reversible transfer of the terminal phosphate group between ATP and AMP. Plays an important role in cellular energy homeostasis and in adenine nucleotide metabolism. This chain is Adenylate kinase, found in Paracoccus denitrificans (strain Pd 1222).